Here is a 196-residue protein sequence, read N- to C-terminus: Ribosome maturation factor RimP (196 aa).

The segment at 164–196 (LAPQKPNKPGPKKTGHEKKKPSNESAAGKPRAE) is disordered. A compositionally biased stretch (basic residues) spans 173-182 (GPKKTGHEKK).

The protein belongs to the RimP family.

It localises to the cytoplasm. Its function is as follows. Required for maturation of 30S ribosomal subunits. The chain is Ribosome maturation factor RimP from Xanthomonas oryzae pv. oryzae (strain MAFF 311018).